A 644-amino-acid polypeptide reads, in one-letter code: Chaperone protein DnaK (644 aa).

T199 is modified (phosphothreonine; by autocatalysis). A compositionally biased stretch (basic and acidic residues) spans 550 to 584 (ADKLDESEKQRAQDEIKRGREAMESGDLERMKASR). 2 disordered regions span residues 550–586 (ADKL…SRDS) and 599–644 (YSQA…EDKK). The span at 600–623 (SQAGPEQGAPGAEAGAGASQGASG) shows a compositional bias: low complexity.

It belongs to the heat shock protein 70 family.

Its function is as follows. Acts as a chaperone. The chain is Chaperone protein DnaK from Leptospira biflexa serovar Patoc (strain Patoc 1 / Ames).